The chain runs to 349 residues: MTDSNQTIPSISDIHDGALAARLQSALDNKTKPLGALGRLESLALRIGLVLGSETPVLEAPQMLVCAADHGLAARGVSAFPSDVTWQMVENFLAGGAAVSVLALQHGLALTVVDCGVRRDFQARPGLVSRRIAAGTADASAGPAMTAEQCAQAIANGREVVRALPGNALLLGEMGIGNSSAAALLLARLAGLDIDGCTGSGTGLDAAGLARKREVLRDVLALHAAASEPLDALAAFGGFEIATLVGAVLQAAQERRVIVIDGFIASAAVLVAQALQPHVAQRCVAAHSSAEPGHALLLKHLGLEPLLNLDLRLGEGSGGALAWPLLESACRILREMASFEAAGVSRKDS.

Glu-315 (proton acceptor) is an active-site residue.

Belongs to the CobT family.

The enzyme catalyses 5,6-dimethylbenzimidazole + nicotinate beta-D-ribonucleotide = alpha-ribazole 5'-phosphate + nicotinate + H(+). It participates in nucleoside biosynthesis; alpha-ribazole biosynthesis; alpha-ribazole from 5,6-dimethylbenzimidazole: step 1/2. Its function is as follows. Catalyzes the synthesis of alpha-ribazole-5'-phosphate from nicotinate mononucleotide (NAMN) and 5,6-dimethylbenzimidazole (DMB). The sequence is that of Nicotinate-nucleotide--dimethylbenzimidazole phosphoribosyltransferase from Variovorax paradoxus (strain S110).